The chain runs to 540 residues: Alanine aminotransferase 2 (540 aa).

Lysine 358 is modified (N6-(pyridoxal phosphate)lysine).

It belongs to the class-I pyridoxal-phosphate-dependent aminotransferase family. Alanine aminotransferase subfamily. In terms of assembly, homodimer. It depends on pyridoxal 5'-phosphate as a cofactor.

The enzyme catalyses L-alanine + 2-oxoglutarate = pyruvate + L-glutamate. It participates in amino-acid degradation; L-alanine degradation via transaminase pathway; pyruvate from L-alanine: step 1/1. Catalyzes the reversible transamination between alanine and 2-oxoglutarate to form pyruvate and glutamate. In Xenopus laevis (African clawed frog), this protein is Alanine aminotransferase 2 (gpt2).